We begin with the raw amino-acid sequence, 247 residues long: uncharacterized protein (247 aa).

Positions 225–247 are disordered; it reads LASAPVPPSGSGNSGHRRANLGL.

This is an uncharacterized protein from Methanocaldococcus jannaschii (strain ATCC 43067 / DSM 2661 / JAL-1 / JCM 10045 / NBRC 100440) (Methanococcus jannaschii).